The following is a 315-amino-acid chain: Sulfate adenylyltransferase subunit 2 1 (315 aa).

The tract at residues 287 to 315 (DSSSSERQGRAIDHDQSGSMERKKREGYF) is disordered. Positions 293 to 315 (RQGRAIDHDQSGSMERKKREGYF) are enriched in basic and acidic residues.

It belongs to the PAPS reductase family. CysD subfamily. Heterodimer composed of CysD, the smaller subunit, and CysN.

It catalyses the reaction sulfate + ATP + H(+) = adenosine 5'-phosphosulfate + diphosphate. It participates in sulfur metabolism; hydrogen sulfide biosynthesis; sulfite from sulfate: step 1/3. In terms of biological role, with CysN forms the ATP sulfurylase (ATPS) that catalyzes the adenylation of sulfate producing adenosine 5'-phosphosulfate (APS) and diphosphate, the first enzymatic step in sulfur assimilation pathway. APS synthesis involves the formation of a high-energy phosphoric-sulfuric acid anhydride bond driven by GTP hydrolysis by CysN coupled to ATP hydrolysis by CysD. The sequence is that of Sulfate adenylyltransferase subunit 2 1 from Alkalilimnicola ehrlichii (strain ATCC BAA-1101 / DSM 17681 / MLHE-1).